The chain runs to 330 residues: Phenylalanine--tRNA ligase alpha subunit (330 aa).

E255 contacts Mg(2+).

The protein belongs to the class-II aminoacyl-tRNA synthetase family. Phe-tRNA synthetase alpha subunit type 1 subfamily. Tetramer of two alpha and two beta subunits. Mg(2+) is required as a cofactor.

It localises to the cytoplasm. It carries out the reaction tRNA(Phe) + L-phenylalanine + ATP = L-phenylalanyl-tRNA(Phe) + AMP + diphosphate + H(+). This is Phenylalanine--tRNA ligase alpha subunit from Acinetobacter baumannii (strain SDF).